The following is a 66-amino-acid chain: Large ribosomal subunit protein bL35 (66 aa).

The interval 1–22 (MAYKLKSHRGAAKRFKKTASGG) is disordered.

Belongs to the bacterial ribosomal protein bL35 family.

The sequence is that of Large ribosomal subunit protein bL35 from Pseudoalteromonas translucida (strain TAC 125).